A 201-amino-acid polypeptide reads, in one-letter code: Prostamide/prostaglandin F synthase (201 aa).

Belongs to the peroxiredoxin-like PRXL2 family. Prostamide/prostaglandin F synthase subfamily.

The protein localises to the cytoplasm. It localises to the cytosol. The catalysed reaction is prostaglandin H2 + [thioredoxin]-dithiol = prostaglandin F2alpha + [thioredoxin]-disulfide. The enzyme catalyses prostamide F2alpha + [thioredoxin]-disulfide = prostamide H2 + [thioredoxin]-dithiol. Functionally, catalyzes the reduction of prostaglandin-ethanolamide H(2) (prostamide H(2)) to prostamide F(2alpha) with NADPH as proton donor. Also able to reduce prostaglandin H(2) to prostaglandin F(2alpha). The polypeptide is Prostamide/prostaglandin F synthase (prxl2b) (Aquarana catesbeiana (American bullfrog)).